A 390-amino-acid polypeptide reads, in one-letter code: GDSL esterase/lipase At1g28580 (390 aa).

The N-terminal stretch at 1–28 is a signal peptide; sequence MAYPGSPILMKLLVFIFLSTFVVTNVSS. Ser-44 (nucleophile) is an active-site residue. N-linked (GlcNAc...) asparagine glycosylation is found at Asn-140 and Asn-322. Residues Asp-347 and His-350 contribute to the active site.

Belongs to the 'GDSL' lipolytic enzyme family.

The protein resides in the secreted. This chain is GDSL esterase/lipase At1g28580, found in Arabidopsis thaliana (Mouse-ear cress).